Consider the following 199-residue polypeptide: Photosystem I reaction center subunit XI (199 aa).

The next 2 membrane-spanning stretches (helical) occupy residues 108–128 (ITAG…LLVL) and 165–185 (FWLG…TLHL).

This sequence belongs to the PsaL family.

The protein resides in the cellular thylakoid membrane. This chain is Photosystem I reaction center subunit XI, found in Prochlorococcus marinus (strain MIT 9515).